Reading from the N-terminus, the 261-residue chain is Monensin polyketide synthase putative ketoacyl reductase (261 aa).

Position 10 to 34 (10 to 34) interacts with NAD(+); it reads LVTGATSGIGLATARLLAAQGHLVF. Substrate is bound at residue S144. The active-site Proton acceptor is the Y157.

It belongs to the short-chain dehydrogenases/reductases (SDR) family.

It participates in antifungal biosynthesis; monensin biosynthesis. The protein is Monensin polyketide synthase putative ketoacyl reductase of Streptomyces virginiae (Streptomyces cinnamonensis).